Consider the following 715-residue polypeptide: Polyphosphate kinase (715 aa).

Asparagine 60 contributes to the ATP binding site. Mg(2+)-binding residues include arginine 380 and arginine 410. Histidine 440 acts as the Phosphohistidine intermediate in catalysis. ATP contacts are provided by tyrosine 473, arginine 569, and histidine 597.

Belongs to the polyphosphate kinase 1 (PPK1) family. The cofactor is Mg(2+). In terms of processing, an intermediate of this reaction is the autophosphorylated ppk in which a phosphate is covalently linked to a histidine residue through a N-P bond.

The enzyme catalyses [phosphate](n) + ATP = [phosphate](n+1) + ADP. Catalyzes the reversible transfer of the terminal phosphate of ATP to form a long-chain polyphosphate (polyP). This chain is Polyphosphate kinase, found in Erythrobacter litoralis (strain HTCC2594).